Consider the following 203-residue polypeptide: Outer-membrane lipoprotein carrier protein (203 aa).

Positions 1-21 (MKKMAIACALLSSVVASSVWA) are cleaved as a signal peptide. Residues 178 to 203 (QQNGAVDPSKFTFTPPQGVTIDDQRK) form a disordered region.

The protein belongs to the LolA family. Monomer.

The protein localises to the periplasm. Functionally, participates in the translocation of lipoproteins from the inner membrane to the outer membrane. Only forms a complex with a lipoprotein if the residue after the N-terminal Cys is not an aspartate (The Asp acts as a targeting signal to indicate that the lipoprotein should stay in the inner membrane). The sequence is that of Outer-membrane lipoprotein carrier protein from Salmonella agona (strain SL483).